The following is an 860-amino-acid chain: Transcription factor E2F8 (860 aa).

2 disordered regions span residues 1-27 and 38-57; these read MENQ…PSSK and DLGP…GEPW. Residues Ser71 and Ser102 each carry the phosphoserine modification. 2 consecutive DNA-binding regions follow at residues 113-182 and 261-347; these read RKEK…TWHG and RKDK…KWTG. Disordered stretches follow at residues 407–433, 532–616, and 745–803; these read RRKI…PPVP, LTPP…PKED, and QMSA…QPVP. A phosphoserine mark is found at Ser412 and Ser416. 2 stretches are compositionally biased toward polar residues: residues 412–429 and 542–554; these read SAPS…SQNS and VCPT…TGSK. The segment covering 555 to 565 has biased composition (basic and acidic residues); it reads DPTDAPAEKTA.

The protein belongs to the E2F/DP family. Interacts with HIF1A. Homodimer and heterodimer: mainly forms homodimers and, to a lesser extent, heterodimers with E2F8. Dimerization is important for DNA-binding. In terms of tissue distribution, highly expressed in liver, skin, thymus and testis. Expressed in trophoblast giant cells throughout placenta development (at protein level).

It is found in the nucleus. Functionally, atypical E2F transcription factor that participates in various processes such as angiogenesis and polyploidization of specialized cells. Mainly acts as a transcription repressor that binds DNA independently of DP proteins and specifically recognizes the E2 recognition site 5'-TTTC[CG]CGC-3'. Directly represses transcription of classical E2F transcription factors such as E2F1: component of a feedback loop in S phase by repressing the expression of E2F1, thereby preventing p53/TP53-dependent apoptosis. Plays a key role in polyploidization of cells in placenta and liver by regulating the endocycle, probably by repressing genes promoting cytokinesis and antagonizing action of classical E2F proteins (E2F1, E2F2 and/or E2F3). Required for placental development by promoting polyploidization of trophoblast giant cells. Acts as a promoter of sprouting angiogenesis, possibly by acting as a transcription activator: associates with HIF1A, recognizes and binds the VEGFA promoter, which is different from canonical E2 recognition site, and activates expression of the VEGFA gene. The polypeptide is Transcription factor E2F8 (E2f8) (Mus musculus (Mouse)).